Reading from the N-terminus, the 153-residue chain is Insulin-like growth factor 1 (153 aa).

Residues 49 to 77 (GPETLCGAELVDALQFVCGDRGFYFNKPT) are b. 3 cysteine pairs are disulfide-bonded: Cys54-Cys96, Cys66-Cys109, and Cys95-Cys100. A c region spans residues 78-89 (GYGSSSRRAPQT). Positions 90 to 110 (GIVDECCFRSCDLRRLEMYCA) are a. The d stretch occupies residues 111-118 (PLKPAKSA). The propeptide at 119–153 (RSVRAQRHTDMPKAQKEVHLKNASRGSAGNKNYRM) is e peptide. The interval 120 to 153 (SVRAQRHTDMPKAQKEVHLKNASRGSAGNKNYRM) is disordered. A compositionally biased stretch (basic and acidic residues) spans 125–138 (RHTDMPKAQKEVHL). Polar residues predominate over residues 142–153 (SRGSAGNKNYRM).

The protein belongs to the insulin family. As to quaternary structure, forms a ternary complex with IGFR1 and ITGAV:ITGB3. Forms a ternary complex with IGFR1 and ITGA6:ITGB4. Forms a ternary complex with IGFBP3 and ALS.

It is found in the secreted. Functionally, the insulin-like growth factors, isolated from plasma, are structurally and functionally related to insulin but have a much higher growth-promoting activity. May be a physiological regulator of [1-14C]-2-deoxy-D-glucose (2DG) transport and glycogen synthesis in osteoblasts. Stimulates glucose transport in bone-derived osteoblastic (PyMS) cells and is effective at much lower concentrations than insulin, not only regarding glycogen and DNA synthesis but also with regard to enhancing glucose uptake. May play a role in synapse maturation. Ca(2+)-dependent exocytosis of IGF1 is required for sensory perception of smell in the olfactory bulb. Acts as a ligand for IGF1R. Binds to the alpha subunit of IGF1R, leading to the activation of the intrinsic tyrosine kinase activity which autophosphorylates tyrosine residues in the beta subunit thus initiating a cascade of down-stream signaling events leading to activation of the PI3K-AKT/PKB and the Ras-MAPK pathways. Binds to integrins ITGAV:ITGB3 and ITGA6:ITGB4. Its binding to integrins and subsequent ternary complex formation with integrins and IGFR1 are essential for IGF1 signaling. Induces the phosphorylation and activation of IGFR1, MAPK3/ERK1, MAPK1/ERK2 and AKT1. As part of the MAPK/ERK signaling pathway, acts as a negative regulator of apoptosis in cardiomyocytes via promotion of STUB1/CHIP-mediated ubiquitination and degradation of ICER-type isoforms of CREM. The sequence is that of Insulin-like growth factor 1 from Canis lupus familiaris (Dog).